The sequence spans 369 residues: Phospho-N-acetylmuramoyl-pentapeptide-transferase (369 aa).

10 helical membrane passes run 3–23, 53–73, 81–101, 118–138, 162–182, 198–218, 240–260, 267–287, 290–310, and 347–367; these read ALLGAGAISLVFTLFLTPLFI, GGIVIILASVIGYFAGHLLTW, VTPSGLLVVFMMVGLGFVGFL, WQKIAGQVIVATVFAVLAITL, FMALGAVIGTGLFIVWICLIV, LAAGASIFSIGSYVIIGFWQF, PLDLAIIAASIVGALIGFLWW, IFMGDTGSLGLGGALAALAIL, TELLLVFIGGLFVIVAGSVVL, and FWIIAGLLVAAGVGTFYLEWI.

The protein belongs to the glycosyltransferase 4 family. MraY subfamily. The cofactor is Mg(2+).

The protein resides in the cell membrane. It catalyses the reaction UDP-N-acetyl-alpha-D-muramoyl-L-alanyl-gamma-D-glutamyl-meso-2,6-diaminopimeloyl-D-alanyl-D-alanine + di-trans,octa-cis-undecaprenyl phosphate = di-trans,octa-cis-undecaprenyl diphospho-N-acetyl-alpha-D-muramoyl-L-alanyl-D-glutamyl-meso-2,6-diaminopimeloyl-D-alanyl-D-alanine + UMP. It participates in cell wall biogenesis; peptidoglycan biosynthesis. Its function is as follows. Catalyzes the initial step of the lipid cycle reactions in the biosynthesis of the cell wall peptidoglycan: transfers peptidoglycan precursor phospho-MurNAc-pentapeptide from UDP-MurNAc-pentapeptide onto the lipid carrier undecaprenyl phosphate, yielding undecaprenyl-pyrophosphoryl-MurNAc-pentapeptide, known as lipid I. The sequence is that of Phospho-N-acetylmuramoyl-pentapeptide-transferase from Clavibacter sepedonicus (Clavibacter michiganensis subsp. sepedonicus).